The chain runs to 365 residues: Gibberellin 20 oxidase 1-B (365 aa).

A Fe2OG dioxygenase domain is found at Gly199–Pro299. 3 residues coordinate Fe cation: His224, Asp226, and His280. Residue Arg290 is part of the active site.

It belongs to the iron/ascorbate-dependent oxidoreductase family. GA20OX subfamily. The cofactor is Fe cation. Requires L-ascorbate as cofactor. In terms of tissue distribution, not detected in nodes and the ear of the elongating stem.

It catalyses the reaction gibberellin A12 + 2 2-oxoglutarate + 3 O2 + H(+) = gibberellin A9 + 2 succinate + 3 CO2 + 2 H2O. The catalysed reaction is gibberellin A53 + 2 2-oxoglutarate + 3 O2 + H(+) = gibberellin A20 + 2 succinate + 3 CO2 + 2 H2O. Functionally, key oxidase enzyme in the biosynthesis of gibberellin that catalyzes the conversion of GA12 and GA53 to GA9 and GA20 respectively, via a three-step oxidation at C-20 of the GA skeleton. The chain is Gibberellin 20 oxidase 1-B (GA20ox1B) from Triticum aestivum (Wheat).